Reading from the N-terminus, the 532-residue chain is Phosphoenolpyruvate carboxykinase (ATP) (532 aa).

The substrate site is built by Arg-60, Tyr-194, and Lys-200. Residues Lys-200, His-219, and 237–245 each bind ATP; that span reads GLSGTGKTT. Lys-200 and His-219 together coordinate Mn(2+). Asp-258 contacts Mn(2+). The ATP site is built by Glu-286, Arg-324, and Thr-449. Arg-324 provides a ligand contact to substrate.

Belongs to the phosphoenolpyruvate carboxykinase (ATP) family. Mn(2+) is required as a cofactor.

Its subcellular location is the cytoplasm. It catalyses the reaction oxaloacetate + ATP = phosphoenolpyruvate + ADP + CO2. The protein operates within carbohydrate biosynthesis; gluconeogenesis. Its function is as follows. Involved in the gluconeogenesis. Catalyzes the conversion of oxaloacetate (OAA) to phosphoenolpyruvate (PEP) through direct phosphoryl transfer between the nucleoside triphosphate and OAA. The protein is Phosphoenolpyruvate carboxykinase (ATP) of Cereibacter sphaeroides (strain ATCC 17029 / ATH 2.4.9) (Rhodobacter sphaeroides).